The primary structure comprises 192 residues: uncharacterized protein (192 aa).

In terms of domain architecture, B12-binding spans 72–192; the sequence is GATVLLIVPP…SLVISEFSLV (121 aa).

This is an uncharacterized protein from Rhodobacter capsulatus (Rhodopseudomonas capsulata).